The sequence spans 429 residues: Serine--tRNA ligase (429 aa).

236–238 (TGE) contributes to the L-serine binding site. 267 to 269 (RSE) serves as a coordination point for ATP. Glu-290 is a binding site for L-serine. 354–357 (EISS) provides a ligand contact to ATP. An L-serine-binding site is contributed by Ser-390.

The protein belongs to the class-II aminoacyl-tRNA synthetase family. Type-1 seryl-tRNA synthetase subfamily. Homodimer. The tRNA molecule binds across the dimer.

The protein resides in the cytoplasm. It carries out the reaction tRNA(Ser) + L-serine + ATP = L-seryl-tRNA(Ser) + AMP + diphosphate + H(+). The catalysed reaction is tRNA(Sec) + L-serine + ATP = L-seryl-tRNA(Sec) + AMP + diphosphate + H(+). Its pathway is aminoacyl-tRNA biosynthesis; selenocysteinyl-tRNA(Sec) biosynthesis; L-seryl-tRNA(Sec) from L-serine and tRNA(Sec): step 1/1. In terms of biological role, catalyzes the attachment of serine to tRNA(Ser). Is also able to aminoacylate tRNA(Sec) with serine, to form the misacylated tRNA L-seryl-tRNA(Sec), which will be further converted into selenocysteinyl-tRNA(Sec). This chain is Serine--tRNA ligase, found in Vesicomyosocius okutanii subsp. Calyptogena okutanii (strain HA).